The sequence spans 216 residues: Vascular endothelial growth factor A (216 aa).

A signal peptide spans 1–26 (MNFLLTWIHWGLAALLYLQSAELSKA). 3 disulfides stabilise this stretch: Cys52–Cys94, Cys83–Cys128, and Cys87–Cys130. N-linked (GlcNAc...) asparagine glycosylation is present at Asn101. Over residues 132-141 (PKKDVKNKQE) the composition is skewed to basic and acidic residues. The tract at residues 132–167 (PKKDVKNKQEKKSKRGKGKGQKRKRKKGRYKPPSFH) is disordered. Positions 142–161 (KKSKRGKGKGQKRKRKKGRY) are enriched in basic residues.

Belongs to the PDGF/VEGF growth factor family. As to quaternary structure, homodimer; disulfide-linked. Also found as heterodimer with PGF.

Growth factor active in angiogenesis, vasculogenesis and endothelial cell growth. Induces endothelial cell proliferation, promotes cell migration, inhibits apoptosis and induces permeabilization of blood vessels. Binds to the FLT1/VEGFR1 and KDR/VEGFR2 receptors, heparan sulfate and heparin. The sequence is that of Vascular endothelial growth factor A (VEGFA) from Gallus gallus (Chicken).